A 341-amino-acid chain; its full sequence is N-acetyl-gamma-glutamyl-phosphate reductase (341 aa).

Cys149 is a catalytic residue.

This sequence belongs to the NAGSA dehydrogenase family. Type 1 subfamily.

Its subcellular location is the cytoplasm. It carries out the reaction N-acetyl-L-glutamate 5-semialdehyde + phosphate + NADP(+) = N-acetyl-L-glutamyl 5-phosphate + NADPH + H(+). The protein operates within amino-acid biosynthesis; L-arginine biosynthesis; N(2)-acetyl-L-ornithine from L-glutamate: step 3/4. In terms of biological role, catalyzes the NADPH-dependent reduction of N-acetyl-5-glutamyl phosphate to yield N-acetyl-L-glutamate 5-semialdehyde. The protein is N-acetyl-gamma-glutamyl-phosphate reductase of Methanocaldococcus jannaschii (strain ATCC 43067 / DSM 2661 / JAL-1 / JCM 10045 / NBRC 100440) (Methanococcus jannaschii).